The following is an 88-amino-acid chain: Probable Fe(2+)-trafficking protein (88 aa).

It belongs to the Fe(2+)-trafficking protein family.

Its function is as follows. Could be a mediator in iron transactions between iron acquisition and iron-requiring processes, such as synthesis and/or repair of Fe-S clusters in biosynthetic enzymes. The protein is Probable Fe(2+)-trafficking protein of Teredinibacter turnerae (strain ATCC 39867 / T7901).